The chain runs to 1098 residues: Mediator of RNA polymerase II transcription subunit 5 (1098 aa).

Positions proline 1019–lysine 1041 are disordered. The segment covering aspartate 1021 to lysine 1041 has biased composition (basic and acidic residues).

This sequence belongs to the Mediator complex subunit 5 family. As to quaternary structure, component of the Mediator complex.

The protein localises to the nucleus. In terms of biological role, component of the Mediator complex, a coactivator involved in the regulated transcription of nearly all RNA polymerase II-dependent genes. Mediator functions as a bridge to convey information from gene-specific regulatory proteins to the basal RNA polymerase II transcription machinery. Mediator is recruited to promoters by direct interactions with regulatory proteins and serves as a scaffold for the assembly of a functional preinitiation complex with RNA polymerase II and the general transcription factors. The sequence is that of Mediator of RNA polymerase II transcription subunit 5 (NUT1) from Eremothecium gossypii (strain ATCC 10895 / CBS 109.51 / FGSC 9923 / NRRL Y-1056) (Yeast).